Reading from the N-terminus, the 387-residue chain is MKKKILLLGSGELGKEFIIAAQRLGQYVIAVDFYDGAPAMQVAHEKEIINMLDGNLLDQVVKKHKPDLIVPEIEAIRTERFYEYEKQGYQIVPSAKAANFTMNRKSIRDLAAKDLKLLTAKYLYASSEKELAKATKILGFPCVVKPLMSSSGKGQSIIKSPKDISKAWEASQTKGRTSATEIIVEEFISFKSEITLLTVTQKNGKTLFCPPIGHRQERGDYQESWQPAEISEVQLKEAQRMAEAVTKELTGFGIWGVEFFLTEDQVYFSELSPRPHDTGMVTLSGTQNFNEFELHIRAILGIPIPEVTQERKGASAVILASTDGKIPEVRGLDIASEMPESDFRIFGKPITRPYRRMGIALSYSTKGEGISSLRKRAILLASKIKVD.

N(1)-(5-phospho-beta-D-ribosyl)glycinamide is bound by residues 12–13 (EL) and glutamate 72. ATP-binding positions include arginine 104, lysine 145, 150 to 155 (SSGKGQ), 185 to 188 (EEFI), and glutamate 193. The region spanning 109–300 (DLAAKDLKLL…EFELHIRAIL (192 aa)) is the ATP-grasp domain. The Mg(2+) site is built by glutamate 258 and glutamate 270. Residues aspartate 277, lysine 348, and 355–356 (RR) each bind N(1)-(5-phospho-beta-D-ribosyl)glycinamide.

The protein belongs to the PurK/PurT family. As to quaternary structure, homodimer.

The catalysed reaction is N(1)-(5-phospho-beta-D-ribosyl)glycinamide + formate + ATP = N(2)-formyl-N(1)-(5-phospho-beta-D-ribosyl)glycinamide + ADP + phosphate + H(+). The protein operates within purine metabolism; IMP biosynthesis via de novo pathway; N(2)-formyl-N(1)-(5-phospho-D-ribosyl)glycinamide from N(1)-(5-phospho-D-ribosyl)glycinamide (formate route): step 1/1. Its function is as follows. Involved in the de novo purine biosynthesis. Catalyzes the transfer of formate to 5-phospho-ribosyl-glycinamide (GAR), producing 5-phospho-ribosyl-N-formylglycinamide (FGAR). Formate is provided by PurU via hydrolysis of 10-formyl-tetrahydrofolate. This chain is Formate-dependent phosphoribosylglycinamide formyltransferase, found in Leptospira borgpetersenii serovar Hardjo-bovis (strain JB197).